Here is a 577-residue protein sequence, read N- to C-terminus: Cytochrome P450 714D1 (577 aa).

Residues 1-3 (MES) are Lumenal-facing. Residues 4–24 (FFVFFTAAALPVVVAAAVIAG) form a helical; Signal-anchor for type III membrane protein membrane-spanning segment. At 25 to 577 (LCITAAWLAR…STAPVHSSHN (553 aa)) the chain is on the cytoplasmic side. The interval 315-343 (REHGGKAAPPSPPERDFLGSIIENSGGQP) is disordered. Residue Cys-504 participates in heme binding.

This sequence belongs to the cytochrome P450 family. The cofactor is heme. In terms of tissue distribution, expressed in rapidly elongating or dividing tissues, including the shoot apical meristem, the intercalary meristem and elongating zones of internodes, and panicle but not in young seedlings, roots and leaves. During the heading stage, the highest expression is detected in the flowering spikelets, anthers, the divisional zone and the node of the uppermost internode.

Its subcellular location is the endoplasmic reticulum membrane. Catalyzes the 16alpha,17-epoxidation on non-13-hydroxylated gibberellins (GAs), including GA4, GA9, and GA12. No activity with GA1, GA20, GA53 or ent-kaurenoic acid. Reduces the biological activity of GAs. The polypeptide is Cytochrome P450 714D1 (CYP714D1) (Oryza sativa subsp. japonica (Rice)).